The following is a 453-amino-acid chain: uncharacterized protein (453 aa).

Residues 1-23 (MFLLQRFFIYGLFLACFYTTVFG) form the signal peptide. The Lumenal portion of the chain corresponds to 24 to 137 (EKHFEAEEYR…EKQFSYSSGT (114 aa)). Residues 138-158 (NGILATFLTAIPPNIFILLVP) form a helical membrane-spanning segment. The Cytoplasmic portion of the chain corresponds to 159–165 (KSFDTSM). A helical transmembrane segment spans residues 166–186 (LNLFVAVSAGSLLGDVFLQLL). Over 187-194 (PTVYSTNG) the chain is Lumenal. Residues 195–215 (GDFPASSVYSILIGALVFFLM) traverse the membrane as a helical segment. Topologically, residues 216–358 (DKGIRILIHE…LRNGYTKSQV (143 aa)) are cytoplasmic. Residues 229–238 (SLSKPKKDGE) are compositionally biased toward basic and acidic residues. The tract at residues 229 to 278 (SLSKPKKDGEETSSVNKPSASSTQTDVKGVEGLRKRNVKDDQNSKGHEPD) is disordered. Residues 240 to 254 (TSSVNKPSASSTQTD) show a composition bias toward polar residues. Residues 256-278 (KGVEGLRKRNVKDDQNSKGHEPD) are compositionally biased toward basic and acidic residues. A helical membrane pass occupies residues 359–379 (LVLQMITMVTGLLGAIVATYI). Residues 380–399 (YTASSSSSPYGSFLLQLEDK) are Lumenal-facing. A helical membrane pass occupies residues 400–420 (LLPFTAGGFLYIAYLGVFPEL). Over 421-432 (LEINLSKGKLGN) the chain is Cytoplasmic. The helical transmembrane segment at 433–453 (MIYTALYMMFIVGGFSFLYYV) threads the bilayer.

Belongs to the ZIP transporter (TC 2.A.5) family. KE4/Catsup subfamily.

Its subcellular location is the endoplasmic reticulum membrane. This is an uncharacterized protein from Schizosaccharomyces pombe (strain 972 / ATCC 24843) (Fission yeast).